The following is a 137-amino-acid chain: uncharacterized protein (137 aa).

Belongs to the ycf72 family.

The protein localises to the plastid. Its subcellular location is the chloroplast. This is an uncharacterized protein from Zea mays (Maize).